The chain runs to 514 residues: MENLSERFNALQDQLMNIYEAAEQTLQAQIKHWQTLRKEAVLLYYAREKGVTRLGYQPVPVKAVSETKAKEAIAMVLQLESLQTSDFAHEPWTLVDTSTETFRSAPEGHFKKGPVPVEVIYDNDPDNANLYTMWTYVYYMDADDKWHKARSGVNHIGIYYLQGTFKNYYVLFADDAKRYGTTGEWEVKVNKDTVFAPVTSSTPPGSPGRQADTDTTAKTPTTSTTAVDSTSRQLTTSKQPQQTETRGRRYGRRPSSKSRRSQTQQRRSRSRHRSRSRSRSRSKSQTHTTWSTTRSRSTSVGKTRALTSRSRSRGRSPSTCRRGGGRSPRRRSRSPSTYSSCTTQRSQRARAESPTTRGARGSRGSRGGSRGGRLRRRGRSSSSSSPAHKRSRGGSAKLRGVSPGEVGGSLRSVSSKHTGRLGRLLEEARDPPVIIVKGAANTLKYFRNRAKIKYTGLFRSFSTTWSWVAGDGTERLGRPRMLISFSSYSQRRDFDEAVRYPKGVDKAYGNLDSL.

A transactivation domain region spans residues 1–201; the sequence is MENLSERFNA…DTVFAPVTSS (201 aa). The tract at residues 196-424 is disordered; sequence APVTSSTPPG…SKHTGRLGRL (229 aa). Residues 213–231 show a composition bias toward low complexity; the sequence is TDTTAKTPTTSTTAVDSTS. A compositionally biased stretch (basic residues) spans 248 to 284; sequence RRYGRRPSSKSRRSQTQQRRSRSRHRSRSRSRSRSKS. Positions 285-299 are enriched in low complexity; it reads QTHTTWSTTRSRSTS. Residues 323–333 show a composition bias toward basic residues; that stretch reads GGGRSPRRRSR. Over residues 334–343 the composition is skewed to low complexity; sequence SPSTYSSCTT. The DNA-binding domain stretch occupies residues 430–514; sequence DPPVIIVKGA…DKAYGNLDSL (85 aa). Lys437 is covalently cross-linked (Glycyl lysine isopeptide (Lys-Gly) (interchain with G-Cter in SUMO)).

The protein belongs to the papillomaviridae E2 protein family. As to quaternary structure, binds DNA as homodimer. Interacts with protein E1; this interaction greatly increases E1 DNA-binding activity. Interacts with protein L1; this interaction enhances E2-dependent replication and transcription activation. Interacts with protein L2; this interaction inhibits E2 transcriptional activity but not DNA replication function E2. Interacts with protein E7; this interaction inhibits E7 oncogenic activity. Interacts with host TAF1; this interaction modulates E2-dependent transcriptional regulation. Interacts with host BRD4; this interaction mediates E2 transcriptional activation function. Additionally, the interaction with host BRD4 on mitotic chromosomes mediates tethering of the viral genome. Interacts with host TOPBP1; this interaction is required for optimal viral DNA replication. In terms of processing, phosphorylated. Sumoylation plays a regulatory role in E2 transcriptional activity.

It is found in the host nucleus. Functionally, plays a role in the initiation of viral DNA replication. A dimer of E2 interacts with a dimer of E1 in order to improve specificity of E1 DNA binding activity. Once the complex recognizes and binds DNA at specific sites, the E2 dimer is removed from DNA. E2 also regulates viral transcription through binding to the E2RE response element (5'-ACCNNNNNNGGT-3') present in multiple copies in the regulatory regions of the viral genome. Activates or represses transcription depending on E2RE's position with regards to proximal promoter elements including the TATA-box. Repression occurs by sterically hindering the assembly of the transcription initiation complex. The sequence is that of Regulatory protein E2 from Human papillomavirus type 5b.